A 370-amino-acid chain; its full sequence is Aminomethyltransferase (370 aa).

This sequence belongs to the GcvT family. As to quaternary structure, the glycine cleavage system is composed of four proteins: P, T, L and H.

It carries out the reaction N(6)-[(R)-S(8)-aminomethyldihydrolipoyl]-L-lysyl-[protein] + (6S)-5,6,7,8-tetrahydrofolate = N(6)-[(R)-dihydrolipoyl]-L-lysyl-[protein] + (6R)-5,10-methylene-5,6,7,8-tetrahydrofolate + NH4(+). The glycine cleavage system catalyzes the degradation of glycine. The sequence is that of Aminomethyltransferase from Corynebacterium aurimucosum (strain ATCC 700975 / DSM 44827 / CIP 107346 / CN-1) (Corynebacterium nigricans).